A 214-amino-acid chain; its full sequence is Uracil phosphoribosyltransferase (214 aa).

5-phospho-alpha-D-ribose 1-diphosphate is bound by residues arginine 81, arginine 106, and 133 to 141 (DPMLATGNS). Uracil is bound by residues isoleucine 196 and 201 to 203 (GDA). Aspartate 202 contributes to the 5-phospho-alpha-D-ribose 1-diphosphate binding site.

Belongs to the UPRTase family. It depends on Mg(2+) as a cofactor.

The catalysed reaction is UMP + diphosphate = 5-phospho-alpha-D-ribose 1-diphosphate + uracil. The protein operates within pyrimidine metabolism; UMP biosynthesis via salvage pathway; UMP from uracil: step 1/1. Allosterically activated by GTP. In terms of biological role, catalyzes the conversion of uracil and 5-phospho-alpha-D-ribose 1-diphosphate (PRPP) to UMP and diphosphate. This Legionella pneumophila (strain Paris) protein is Uracil phosphoribosyltransferase.